Here is a 321-residue protein sequence, read N- to C-terminus: Tetraacyldisaccharide 4'-kinase (321 aa).

Ser54–Thr61 is a binding site for ATP.

The protein belongs to the LpxK family.

The enzyme catalyses a lipid A disaccharide + ATP = a lipid IVA + ADP + H(+). The protein operates within glycolipid biosynthesis; lipid IV(A) biosynthesis; lipid IV(A) from (3R)-3-hydroxytetradecanoyl-[acyl-carrier-protein] and UDP-N-acetyl-alpha-D-glucosamine: step 6/6. In terms of biological role, transfers the gamma-phosphate of ATP to the 4'-position of a tetraacyldisaccharide 1-phosphate intermediate (termed DS-1-P) to form tetraacyldisaccharide 1,4'-bis-phosphate (lipid IVA). This chain is Tetraacyldisaccharide 4'-kinase, found in Rickettsia typhi (strain ATCC VR-144 / Wilmington).